Here is a 65-residue protein sequence, read N- to C-terminus: Antitoxin VapB32 (65 aa).

A disordered region spans residues A46–R65.

Its function is as follows. Antitoxin component of a type II toxin-antitoxin (TA) system. The sequence is that of Antitoxin VapB32 (vapB32) from Mycobacterium tuberculosis (strain CDC 1551 / Oshkosh).